The following is a 505-amino-acid chain: Catalase (505 aa).

Positions Met1 to Ala25 are disordered. Catalysis depends on residues His56 and Asn129. Tyr339 is a heme binding site.

The protein belongs to the catalase family. Homodimer. It depends on heme as a cofactor.

The catalysed reaction is 2 H2O2 = O2 + 2 H2O. In terms of biological role, decomposes hydrogen peroxide into water and oxygen; serves to protect cells from the toxic effects of hydrogen peroxide. The polypeptide is Catalase (katA) (Staphylococcus aureus).